A 271-amino-acid polypeptide reads, in one-letter code: Phosphonoacetaldehyde hydrolase (271 aa).

Asp12 (nucleophile) is an active-site residue. Positions 12 and 14 each coordinate Mg(2+). Lys54 functions as the Schiff-base intermediate with substrate in the catalytic mechanism. Asp188 contacts Mg(2+).

Belongs to the HAD-like hydrolase superfamily. PhnX family. Homodimer. Mg(2+) is required as a cofactor.

The enzyme catalyses phosphonoacetaldehyde + H2O = acetaldehyde + phosphate + H(+). Its function is as follows. Involved in phosphonate degradation. The protein is Phosphonoacetaldehyde hydrolase of Aliivibrio salmonicida (strain LFI1238) (Vibrio salmonicida (strain LFI1238)).